We begin with the raw amino-acid sequence, 111 residues long: RNA polymerase-binding protein RbpA (111 aa).

This sequence belongs to the RNA polymerase-binding protein RbpA family. Forms a complex with the RNAP catalytic core and with free principal sigma factors.

In terms of biological role, binds to RNA polymerase (RNAP), stimulating transcription from principal, but not alternative sigma factor promoters. The polypeptide is RNA polymerase-binding protein RbpA (Mycobacterium tuberculosis (strain CDC 1551 / Oshkosh)).